We begin with the raw amino-acid sequence, 51 residues long: Insulin (51 aa).

3 cysteine pairs are disulfide-bonded: Cys-7–Cys-37, Cys-19–Cys-50, and Cys-36–Cys-41.

The protein belongs to the insulin family. In terms of assembly, heterodimer of a B chain and an A chain linked by two disulfide bonds.

The protein resides in the secreted. In terms of biological role, insulin decreases blood glucose concentration. It increases cell permeability to monosaccharides, amino acids and fatty acids. It accelerates glycolysis, the pentose phosphate cycle, and glycogen synthesis in liver. This Balaenoptera borealis (Sei whale) protein is Insulin (INS).